The chain runs to 778 residues: Lon protease (778 aa).

One can recognise a Lon N-terminal domain in the interval 6–207 (LPLMALRDMV…TVISTLTSNI (202 aa)). Position 356-363 (356-363 (GPPGVGKT)) interacts with ATP. Positions 592-773 (EDQIGSTTGL…DQVLKHALVE (182 aa)) constitute a Lon proteolytic domain. Active-site residues include S679 and K722.

The protein belongs to the peptidase S16 family. As to quaternary structure, homohexamer. Organized in a ring with a central cavity.

It localises to the cytoplasm. It carries out the reaction Hydrolysis of proteins in presence of ATP.. ATP-dependent serine protease that mediates the selective degradation of mutant and abnormal proteins as well as certain short-lived regulatory proteins. Required for cellular homeostasis and for survival from DNA damage and developmental changes induced by stress. Degrades polypeptides processively to yield small peptide fragments that are 5 to 10 amino acids long. Binds to DNA in a double-stranded, site-specific manner. The protein is Lon protease of Rickettsia felis (strain ATCC VR-1525 / URRWXCal2) (Rickettsia azadi).